The chain runs to 529 residues: FAD-binding monooxygenase BOA2 (529 aa).

FAD contacts are provided by residues V58 to K61, D70 to I71, and Y76. Position 68 to 70 (A68 to D70) interacts with NADP(+). Residues T198–Q204 and R221–S222 each bind NADP(+).

It belongs to the FAD-binding monooxygenase family. FAD is required as a cofactor.

The protein operates within polyketide biosynthesis. Functionally, FAD-binding monooxygenase; part of the gene cluster A that mediates the biosynthesis of botcinic acid and its botcinin derivatives, acetate-derived polyketides that contribute to virulence when combined with the sesquiterpene botrydial. Botcinic acid and its derivatives have been shown to induce chlorosis and necrosis during host plant infection, but also have antifungal activities. Two polyketide synthases, BOA6 and BOA9, are involved in the biosynthesis of botcinins. BOA6 mediates the formation of the per-methylated tetraketide core by condensation of four units of malonyl-CoA with one unit of acetyl-CoA, which would be methylated in activated methylene groups to yield a bicyclic acid intermediate that could then either be converted to botrylactone derivatives or lose the starter acetate unit through a retro-Claisen type C-C bond cleavage to yield botcinin derivatives. The second polyketide synthase, BOA9, is probably required for the biosynthesis of the tetraketide side chain of botcinins. The methyltransferase (MT) domain within BOA6 is probably responsible for the incorporation of four methyl groups. The trans-enoyl reductase BOA5 might take over the enoyl reductase function of BOA6 that misses an ER domain. The monooxygenases BOA2, BOA3 and BOA4 might be involved in further hydroxylations at C4, C5 and C8, whereas BOA7, close to BOA9, could potentially be involved in the hydroxylation at C4 in the side chain of botcinins. The polypeptide is FAD-binding monooxygenase BOA2 (Botryotinia fuckeliana (strain B05.10) (Noble rot fungus)).